The sequence spans 236 residues: MSDIVSISSARPRLLVSVRGPDEALTALRAGADLIDAKDPERGALGALPPETVRAIVAGVGGRAVTSAVAGDGTGREIAAAIATIAATGVDFIKIAVGGADDAALAEAAAQAPGRVIGVLFAEDDVAEDGPARLAAAGFVGAMIDTRGKSGTTLTSLMAAPQLAAFVAGCRTHGLMSGLAGSLGLGDIPVLARLDPDYLGFRGGLCRASDRRQALDGARVAQAVEAMRAGPRADAA.

The active-site Schiff-base intermediate with substrate is the Lys38. The active-site Proton acceptor is the Lys94.

The protein belongs to the MfnB family.

It catalyses the reaction 2 D-glyceraldehyde 3-phosphate = 4-(hydroxymethyl)-2-furancarboxaldehyde phosphate + phosphate + 2 H2O. Its function is as follows. Catalyzes the formation of 4-(hydroxymethyl)-2-furancarboxaldehyde phosphate (4-HFC-P) from two molecules of glyceraldehyde-3-P (GA-3-P). The sequence is that of Putative (5-formylfuran-3-yl)methyl phosphate synthase from Methylorubrum extorquens (Methylobacterium dichloromethanicum).